The chain runs to 430 residues: Asparagine--tRNA ligase (430 aa).

The protein belongs to the class-II aminoacyl-tRNA synthetase family. Homodimer.

The protein resides in the cytoplasm. It carries out the reaction tRNA(Asn) + L-asparagine + ATP = L-asparaginyl-tRNA(Asn) + AMP + diphosphate + H(+). In Staphylococcus saprophyticus subsp. saprophyticus (strain ATCC 15305 / DSM 20229 / NCIMB 8711 / NCTC 7292 / S-41), this protein is Asparagine--tRNA ligase.